The chain runs to 324 residues: Olfactory receptor 4K15 (324 aa).

The Extracellular portion of the chain corresponds to 1–25 (MNETNHSRVTEFVLLGLSSSRELQP). N-linked (GlcNAc...) asparagine glycosylation is found at asparagine 2 and asparagine 5. A helical transmembrane segment spans residues 26 to 49 (FLFLTFSLLYLAILLGNFLIILTV). The Cytoplasmic portion of the chain corresponds to 50–57 (TSDSRLHT). The helical transmembrane segment at 58-79 (PMYFLLANLSFIDVCVASFATP) threads the bilayer. Residues 80 to 100 (KMIADFLVERKTISFDACLAQ) lie on the Extracellular side of the membrane. The cysteines at positions 97 and 189 are disulfide-linked. The helical transmembrane segment at 101-120 (IFFVHLFTGSEMVLLVSMAY) threads the bilayer. Residues 121–139 (DRYVAICKPLHYMTVMSRR) lie on the Cytoplasmic side of the membrane. The helical transmembrane segment at 140–158 (VCVVLVLISWFVGFIHTTS) threads the bilayer. Residues 159-195 (QLAFTVNLPFCGPNKVDSFFCDLPLVTKLACIDTYVV) lie on the Extracellular side of the membrane. Residues 196–219 (SLLIVADSGFLSLSSFLLLVVSYT) form a helical membrane-spanning segment. Over 220–235 (VILVTVRNRSSASMAK) the chain is Cytoplasmic. The chain crosses the membrane as a helical span at residues 236–258 (ARSTLTAHITVVTLFFGPCIFIY). Residues 259–269 (VWPFSSYSVDK) lie on the Extracellular side of the membrane. A helical membrane pass occupies residues 270 to 289 (VLAVFYTIFTLILNPVIYTL). Over 290 to 324 (RNKEVKAAMSKLKSRYLKPSQVSVVIRNVLFLETK) the chain is Cytoplasmic.

It belongs to the G-protein coupled receptor 1 family.

Its subcellular location is the cell membrane. In terms of biological role, odorant receptor. The chain is Olfactory receptor 4K15 (OR4K15) from Homo sapiens (Human).